We begin with the raw amino-acid sequence, 378 residues long: MNAPTTVADSVTVPVSLGDRSYDILIGKGLVERAGEEVAKRLKGVRVAIVTDENVAAVHLERLQASFARAGIDSTPVIVAPGEKSKSFATLETVTNAILAAKLERGDAVVALGGGVVGDLSGFVAGIVRRGMNFVQMPTSLLAQVDSSVGGKTGINTAHGKNLVGVFNQPQLVLADTQVLDTLSPREFRAGYAEIAKYGLIDRPDFFAWLEANWQEVFSGGAARTKAIAESCRSKAAVVARDERETGDRALLNLGHTFGHALESATGYDSSRLVHGEGVAIGMALAYRFSARMNLAGIEAAERVEAHLKAVGLPVSLAEVPGGLPPAEKLMDYIAQDKKVTRGTLTFILTHGIGQSFIAKDVPPAAVLEFLKERLAIA.

NAD(+) is bound by residues 115–119 (GVVGD), 139–140 (TS), Lys152, and Lys161. The Zn(2+) site is built by Glu194, His256, and His275.

This sequence belongs to the sugar phosphate cyclases superfamily. Dehydroquinate synthase family. Requires Co(2+) as cofactor. The cofactor is Zn(2+). It depends on NAD(+) as a cofactor.

The protein resides in the cytoplasm. It catalyses the reaction 7-phospho-2-dehydro-3-deoxy-D-arabino-heptonate = 3-dehydroquinate + phosphate. Its pathway is metabolic intermediate biosynthesis; chorismate biosynthesis; chorismate from D-erythrose 4-phosphate and phosphoenolpyruvate: step 2/7. Catalyzes the conversion of 3-deoxy-D-arabino-heptulosonate 7-phosphate (DAHP) to dehydroquinate (DHQ). In Brucella suis (strain ATCC 23445 / NCTC 10510), this protein is 3-dehydroquinate synthase.